Here is a 159-residue protein sequence, read N- to C-terminus: NAD(P)H-quinone oxidoreductase subunit J, chloroplastic (159 aa).

It belongs to the complex I 30 kDa subunit family. NDH is composed of at least 16 different subunits, 5 of which are encoded in the nucleus.

Its subcellular location is the plastid. The protein resides in the chloroplast thylakoid membrane. It carries out the reaction a plastoquinone + NADH + (n+1) H(+)(in) = a plastoquinol + NAD(+) + n H(+)(out). The enzyme catalyses a plastoquinone + NADPH + (n+1) H(+)(in) = a plastoquinol + NADP(+) + n H(+)(out). In terms of biological role, NDH shuttles electrons from NAD(P)H:plastoquinone, via FMN and iron-sulfur (Fe-S) centers, to quinones in the photosynthetic chain and possibly in a chloroplast respiratory chain. The immediate electron acceptor for the enzyme in this species is believed to be plastoquinone. Couples the redox reaction to proton translocation, and thus conserves the redox energy in a proton gradient. In Triticum aestivum (Wheat), this protein is NAD(P)H-quinone oxidoreductase subunit J, chloroplastic.